Consider the following 493-residue polypeptide: Uridine 5'-monophosphate synthase (493 aa).

The tract at residues 1 to 207 (MVAQNSDKMR…VAKYIAAVQI (207 aa)) is OPRTase. The domain linker stretch occupies residues 208–233 (NSDGTFVGGDKGDVVRANDLQRTKLT). Residues 234-493 (YENRANLAKS…WAAYQDRVAK (260 aa)) are OMPdecase. Residue lysine 320 is part of the active site.

The protein in the N-terminal section; belongs to the purine/pyrimidine phosphoribosyltransferase family. This sequence in the C-terminal section; belongs to the OMP decarboxylase family.

The catalysed reaction is orotidine 5'-phosphate + diphosphate = orotate + 5-phospho-alpha-D-ribose 1-diphosphate. It carries out the reaction orotidine 5'-phosphate + H(+) = UMP + CO2. It participates in pyrimidine metabolism; UMP biosynthesis via de novo pathway; UMP from orotate: step 1/2. Its pathway is pyrimidine metabolism; UMP biosynthesis via de novo pathway; UMP from orotate: step 2/2. The chain is Uridine 5'-monophosphate synthase (r-l) from Drosophila melanogaster (Fruit fly).